A 308-amino-acid polypeptide reads, in one-letter code: Protein translocase subunit SecF (308 aa).

Transmembrane regions (helical) follow at residues 14 to 34 (FFLL…LFGF), 134 to 154 (VYAV…RFEF), 158 to 178 (ISGI…FALL), 185 to 205 (TFVA…IVIF), 238 to 258 (SIRT…FGGI), and 267 to 287 (LIIG…PIWV).

Belongs to the SecD/SecF family. SecF subfamily. In terms of assembly, forms a complex with SecD. Part of the essential Sec protein translocation apparatus which comprises SecA, SecYEG and auxiliary proteins SecDF. Other proteins may also be involved.

Its subcellular location is the cell membrane. Functionally, part of the Sec protein translocase complex. Interacts with the SecYEG preprotein conducting channel. SecDF uses the proton motive force (PMF) to complete protein translocation after the ATP-dependent function of SecA. The chain is Protein translocase subunit SecF from Alicyclobacillus acidocaldarius subsp. acidocaldarius (strain ATCC 27009 / DSM 446 / BCRC 14685 / JCM 5260 / KCTC 1825 / NBRC 15652 / NCIMB 11725 / NRRL B-14509 / 104-IA) (Bacillus acidocaldarius).